A 323-amino-acid polypeptide reads, in one-letter code: Transcription factor MYB108 (323 aa).

HTH myb-type domains are found at residues 16-68 (EMDL…LNYL) and 69-123 (RPDV…QKHA). 2 consecutive DNA-binding regions (H-T-H motif) follow at residues 44–68 (WNSL…LNYL) and 96–119 (WSKI…RTRV).

As to quaternary structure, interacts with BOI, but not with BRG1. In terms of processing, ubiquitinated in vitro by BOI. Expressed specifically in flowers. Restricted to anthers in maturing flowers. Strongest expression in the vascular and connective tissue where the anther attaches to the filament. Not detected in pollen.

The protein localises to the nucleus. In terms of biological role, transcription factor contributing to the regulation of stamen maturation and male fertility in response to jasmonate signaling. Required for correct timing of anther dehiscence. Acts as a negative regulator of abscisic acid-induced cell death. Not involved in the regulation of BOI. Regulated by MYB21 and at a lower level by MYB24. Negatively regulated by the proteasome in an SCF(COI1) E3 ubiquitin-protein ligase complex-dependent manner. This is Transcription factor MYB108 (MYB108) from Arabidopsis thaliana (Mouse-ear cress).